The following is a 190-amino-acid chain: uncharacterized protein (190 aa).

Residues 12-34 traverse the membrane as a helical segment; that stretch reads LLGLSIFLTTFLFVANFLPGIFA.

The protein localises to the membrane. This is an uncharacterized protein from Archaeoglobus fulgidus (strain ATCC 49558 / DSM 4304 / JCM 9628 / NBRC 100126 / VC-16).